Here is a 173-residue protein sequence, read N- to C-terminus: Bifunctional protein PyrR (173 aa).

Positions 93 to 105 (VILIDDVLYTGRT) match the PRPP-binding motif.

The protein belongs to the purine/pyrimidine phosphoribosyltransferase family. PyrR subfamily. As to quaternary structure, homodimer and homohexamer; in equilibrium.

It catalyses the reaction UMP + diphosphate = 5-phospho-alpha-D-ribose 1-diphosphate + uracil. In terms of biological role, regulates transcriptional attenuation of the pyrimidine nucleotide (pyr) operon by binding in a uridine-dependent manner to specific sites on pyr mRNA. This disrupts an antiterminator hairpin in the RNA and favors formation of a downstream transcription terminator, leading to a reduced expression of downstream genes. Functionally, also displays a weak uracil phosphoribosyltransferase activity which is not physiologically significant. The polypeptide is Bifunctional protein PyrR (Streptococcus pyogenes serotype M12 (strain MGAS2096)).